Reading from the N-terminus, the 83-residue chain is Small ribosomal subunit protein uS17 (83 aa).

Belongs to the universal ribosomal protein uS17 family. Part of the 30S ribosomal subunit.

Its function is as follows. One of the primary rRNA binding proteins, it binds specifically to the 5'-end of 16S ribosomal RNA. The protein is Small ribosomal subunit protein uS17 of Campylobacter jejuni subsp. jejuni serotype O:6 (strain 81116 / NCTC 11828).